The sequence spans 154 residues: Ribosome maturation factor RimP (154 aa).

The protein belongs to the RimP family.

It is found in the cytoplasm. Required for maturation of 30S ribosomal subunits. This is Ribosome maturation factor RimP from Clostridium perfringens (strain ATCC 13124 / DSM 756 / JCM 1290 / NCIMB 6125 / NCTC 8237 / Type A).